We begin with the raw amino-acid sequence, 131 residues long: Small ribosomal subunit protein uS11 (131 aa).

This sequence belongs to the universal ribosomal protein uS11 family. Part of the 30S ribosomal subunit. Interacts with proteins S7 and S18. Binds to IF-3.

Its function is as follows. Located on the platform of the 30S subunit, it bridges several disparate RNA helices of the 16S rRNA. Forms part of the Shine-Dalgarno cleft in the 70S ribosome. In Wolinella succinogenes (strain ATCC 29543 / DSM 1740 / CCUG 13145 / JCM 31913 / LMG 7466 / NCTC 11488 / FDC 602W) (Vibrio succinogenes), this protein is Small ribosomal subunit protein uS11.